The primary structure comprises 116 residues: Holo-[acyl-carrier-protein] synthase (116 aa).

Positions 5 and 50 each coordinate Mg(2+).

Belongs to the P-Pant transferase superfamily. AcpS family. The cofactor is Mg(2+).

It localises to the cytoplasm. The catalysed reaction is apo-[ACP] + CoA = holo-[ACP] + adenosine 3',5'-bisphosphate + H(+). Its function is as follows. Transfers the 4'-phosphopantetheine moiety from coenzyme A to a Ser of acyl-carrier-protein. The chain is Holo-[acyl-carrier-protein] synthase from Nitratiruptor sp. (strain SB155-2).